Reading from the N-terminus, the 458-residue chain is Smoothelin-like protein 2 (458 aa).

A coiled-coil region spans residues 24-88; sequence LEGAVRALHE…RQVESLGLTT (65 aa). Disordered regions lie at residues 87–111, 123–142, and 151–312; these read TTGL…RAPR, FSLS…SELE, and IIEN…GAQA. Positions 94-104 are enriched in pro residues; the sequence is PGTPSPPPAPG. A Phosphothreonine modification is found at T96. Phosphoserine occurs at positions 98, 126, and 131. Residues 131–142 are compositionally biased toward basic and acidic residues; it reads SLDHHDEASELE. 2 stretches are compositionally biased toward low complexity: residues 158 to 167 and 209 to 220; these read PGADPGDGPP and TSATALSPTSAA. Polar residues predominate over residues 225–244; the sequence is LSSSPSEATTPWTPSPSEKN. Low complexity predominate over residues 245–254; the sequence is SSLPRSLSSS. Residues S252, S254, and S267 each carry the phosphoserine modification. Positions 270–283 are enriched in pro residues; it reads LVTPPQSPPSPQPP. A Phosphothreonine modification is found at T272. The residue at position 276 (S276) is a Phosphoserine. Residues 290–299 are compositionally biased toward basic and acidic residues; that stretch reads RPGERRRELV. Over residues 300–310 the composition is skewed to polar residues; that stretch reads RSQTLPRTSGA. At S341 the chain carries Phosphoserine. A Calponin-homology (CH) domain is found at 348-455; the sequence is SSIKQILLEW…YVQSLYNHLR (108 aa).

It belongs to the smoothelin family.

This chain is Smoothelin-like protein 2 (SMTNL2), found in Bos taurus (Bovine).